A 358-amino-acid polypeptide reads, in one-letter code: Alanine racemase (358 aa).

The active-site Proton acceptor; specific for D-alanine is the K35. N6-(pyridoxal phosphate)lysine is present on K35. R130 is a binding site for substrate. Y255 (proton acceptor; specific for L-alanine) is an active-site residue. M303 contributes to the substrate binding site.

It belongs to the alanine racemase family. Pyridoxal 5'-phosphate serves as cofactor.

It catalyses the reaction L-alanine = D-alanine. It participates in amino-acid biosynthesis; D-alanine biosynthesis; D-alanine from L-alanine: step 1/1. Catalyzes the interconversion of L-alanine and D-alanine. May also act on other amino acids. The sequence is that of Alanine racemase (alr) from Shewanella sp. (strain ANA-3).